The following is a 387-amino-acid chain: Queuine tRNA-ribosyltransferase (387 aa).

Aspartate 102 (proton acceptor) is an active-site residue. Substrate is bound by residues 102–106 (DSGGF), aspartate 156, glutamine 205, and glycine 232. Positions 263–269 (GVGTPED) are RNA binding. The Nucleophile role is filled by aspartate 282. The tract at residues 287–291 (TRNAR) is RNA binding; important for wobble base 34 recognition. Positions 320, 322, 325, and 351 each coordinate Zn(2+).

Belongs to the queuine tRNA-ribosyltransferase family. In terms of assembly, homodimer. Within each dimer, one monomer is responsible for RNA recognition and catalysis, while the other monomer binds to the replacement base PreQ1. Zn(2+) is required as a cofactor.

It carries out the reaction 7-aminomethyl-7-carbaguanine + guanosine(34) in tRNA = 7-aminomethyl-7-carbaguanosine(34) in tRNA + guanine. The protein operates within tRNA modification; tRNA-queuosine biosynthesis. Functionally, catalyzes the base-exchange of a guanine (G) residue with the queuine precursor 7-aminomethyl-7-deazaguanine (PreQ1) at position 34 (anticodon wobble position) in tRNAs with GU(N) anticodons (tRNA-Asp, -Asn, -His and -Tyr). Catalysis occurs through a double-displacement mechanism. The nucleophile active site attacks the C1' of nucleotide 34 to detach the guanine base from the RNA, forming a covalent enzyme-RNA intermediate. The proton acceptor active site deprotonates the incoming PreQ1, allowing a nucleophilic attack on the C1' of the ribose to form the product. After dissociation, two additional enzymatic reactions on the tRNA convert PreQ1 to queuine (Q), resulting in the hypermodified nucleoside queuosine (7-(((4,5-cis-dihydroxy-2-cyclopenten-1-yl)amino)methyl)-7-deazaguanosine). The sequence is that of Queuine tRNA-ribosyltransferase from Polaromonas naphthalenivorans (strain CJ2).